A 165-amino-acid polypeptide reads, in one-letter code: NADPH-dependent 7-cyano-7-deazaguanine reductase (165 aa).

C56 serves as the catalytic Thioimide intermediate. D63 functions as the Proton donor in the catalytic mechanism. Substrate-binding positions include 78–80 (VES) and 97–98 (HE).

Belongs to the GTP cyclohydrolase I family. QueF type 1 subfamily.

Its subcellular location is the cytoplasm. It carries out the reaction 7-aminomethyl-7-carbaguanine + 2 NADP(+) = 7-cyano-7-deazaguanine + 2 NADPH + 3 H(+). It participates in tRNA modification; tRNA-queuosine biosynthesis. In terms of biological role, catalyzes the NADPH-dependent reduction of 7-cyano-7-deazaguanine (preQ0) to 7-aminomethyl-7-deazaguanine (preQ1). This Bacillus cereus (strain ATCC 14579 / DSM 31 / CCUG 7414 / JCM 2152 / NBRC 15305 / NCIMB 9373 / NCTC 2599 / NRRL B-3711) protein is NADPH-dependent 7-cyano-7-deazaguanine reductase.